The primary structure comprises 284 residues: Stomatin (284 aa).

Topologically, residues 1 to 31 (MSDKRQSSHVQSQRIPESFRENSKTELGACG) are cytoplasmic. Position 18 is a phosphoserine (serine 18). The S-palmitoyl cysteine moiety is linked to residue cysteine 30. An intramembrane segment occupies 32–52 (WILVAASFFFVIITFPISIWI). At 53 to 284 (CIKIVKEYER…MLQGIMGSNH (232 aa)) the chain is on the cytoplasmic side. Cysteine 87 carries the S-palmitoyl cysteine lipid modification. 2 positions are modified to phosphoserine: serine 161 and serine 244. A required for homooligomerization region spans residues 265–273 (STIVFPLPV). The segment at 267 to 269 (IVF) is required for lipid raft association. Residues 273-284 (VDMLQGIMGSNH) are interaction with LANCL1.

Belongs to the band 7/mec-2 family. As to quaternary structure, interacts with LANCL1. Interacts with SLC2A1. Interacts with SLC4A1; this interaction positively regulates SLC4A1 activity. Identified in large complexes with SLC40A1, SLC14A1, SLC29A1 and AQP1. Homodimer and higher order homooligomers. The homodimer is banana-shaped. Interacts with ASIC1, ASIC2 and ASIC3. Interacts with STOML1; may redistribute STOM from the plasma membrane to late endosomes. In terms of tissue distribution, expressed in all sensory neurons of the dorsal root ganglia. In the CNS, expressed in many neurons of the spinal cord, medulla and pons. Expressed only in scattered neurons in the cortex, hippocampus, thalamus and basal ganglia. In the cerebellum, expressed in all Purkinje cells (at protein level). Widely expressed with high levels in heart, liver, skeletal muscle and testis and low levels in lung, brain and spleen.

Its subcellular location is the cell membrane. It localises to the cytoplasm. It is found in the cytoskeleton. The protein localises to the membrane raft. The protein resides in the melanosome. Its subcellular location is the cytoplasmic vesicle. Its function is as follows. Regulates ion channel activity and transmembrane ion transport. Regulates ASIC2 and ASIC3 channel activity. The chain is Stomatin from Mus musculus (Mouse).